The sequence spans 491 residues: Ketol-acid reductoisomerase (NADP(+)) (491 aa).

A KARI N-terminal Rossmann domain is found at 15 to 208; the sequence is AQLGKCRFMG…GGHRAGVLES (194 aa). NADP(+) is bound by residues 45–48, Arg68, Arg76, Ser78, and 108–110; these read CGAQ and DKQ. His132 is an active-site residue. Gly158 contacts NADP(+). 2 KARI C-terminal knotted domains span residues 209 to 344 and 345 to 484; these read SFVA…TAPQ and YEGK…MTDM. Residues Asp217, Glu221, Glu389, and Glu393 each contribute to the Mg(2+) site. Residue Ser414 coordinates substrate.

Belongs to the ketol-acid reductoisomerase family. It depends on Mg(2+) as a cofactor.

The catalysed reaction is (2R)-2,3-dihydroxy-3-methylbutanoate + NADP(+) = (2S)-2-acetolactate + NADPH + H(+). It catalyses the reaction (2R,3R)-2,3-dihydroxy-3-methylpentanoate + NADP(+) = (S)-2-ethyl-2-hydroxy-3-oxobutanoate + NADPH + H(+). It functions in the pathway amino-acid biosynthesis; L-isoleucine biosynthesis; L-isoleucine from 2-oxobutanoate: step 2/4. It participates in amino-acid biosynthesis; L-valine biosynthesis; L-valine from pyruvate: step 2/4. Functionally, involved in the biosynthesis of branched-chain amino acids (BCAA). Catalyzes an alkyl-migration followed by a ketol-acid reduction of (S)-2-acetolactate (S2AL) to yield (R)-2,3-dihydroxy-isovalerate. In the isomerase reaction, S2AL is rearranged via a Mg-dependent methyl migration to produce 3-hydroxy-3-methyl-2-ketobutyrate (HMKB). In the reductase reaction, this 2-ketoacid undergoes a metal-dependent reduction by NADPH to yield (R)-2,3-dihydroxy-isovalerate. In Escherichia coli O8 (strain IAI1), this protein is Ketol-acid reductoisomerase (NADP(+)).